Consider the following 462-residue polypeptide: Cysteine--tRNA ligase (462 aa).

Position 29 (cysteine 29) interacts with Zn(2+). The short motif at 31 to 41 (PTVYNHAHIGN) is the 'HIGH' region element. Zn(2+)-binding residues include cysteine 211, histidine 236, and glutamate 240. Positions 269-273 (KMSKS) match the 'KMSKS' region motif. Lysine 272 provides a ligand contact to ATP.

It belongs to the class-I aminoacyl-tRNA synthetase family. Monomer. Zn(2+) serves as cofactor.

It is found in the cytoplasm. The catalysed reaction is tRNA(Cys) + L-cysteine + ATP = L-cysteinyl-tRNA(Cys) + AMP + diphosphate. This is Cysteine--tRNA ligase from Caulobacter sp. (strain K31).